The sequence spans 171 residues: Superoxide dismutase [Cu-Zn] 2 (171 aa).

The signal sequence occupies residues 1-20 (MKKLSGVLAGSLLLISASFS). Residues histidine 67, histidine 69, and histidine 85 each coordinate Cu cation. An intrachain disulfide couples cysteine 74 to cysteine 167. Zn(2+)-binding residues include histidine 85, histidine 93, histidine 102, and aspartate 105. Residue histidine 147 coordinates Cu cation.

This sequence belongs to the Cu-Zn superoxide dismutase family. It depends on Cu cation as a cofactor. The cofactor is Zn(2+).

The catalysed reaction is 2 superoxide + 2 H(+) = H2O2 + O2. Functionally, destroys radicals which are normally produced within the cells and which are toxic to biological systems. The chain is Superoxide dismutase [Cu-Zn] 2 (sodC2) from Aquifex aeolicus (strain VF5).